We begin with the raw amino-acid sequence, 84 residues long: MKVTLIAILTCAAVLVLHTTAAEELEESQLMEVGMPDTELAAVDEERLFECPVSCEIEKEGNKDCKKKKCKGGWKCKFNMCVKV.

An N-terminal signal peptide occupies residues 1–22; it reads MKVTLIAILTCAAVLVLHTTAA. The propeptide occupies 23 to 47; that stretch reads EELEESQLMEVGMPDTELAAVDEER. Disulfide bonds link C51/C65, C55/C76, and C70/C81.

The protein belongs to the neurotoxin 12 (Hwtx-2) family. 02 (Hwtx-2) subfamily. Expressed by the venom gland.

It localises to the secreted. Postsynaptic neurotoxin. In Cyriopagopus hainanus (Chinese bird spider), this protein is U4-theraphotoxin-Hhn1n.